The chain runs to 430 residues: Asparagine--tRNA ligase (430 aa).

The protein belongs to the class-II aminoacyl-tRNA synthetase family. As to quaternary structure, homodimer.

The protein resides in the cytoplasm. The enzyme catalyses tRNA(Asn) + L-asparagine + ATP = L-asparaginyl-tRNA(Asn) + AMP + diphosphate + H(+). This is Asparagine--tRNA ligase from Oceanobacillus iheyensis (strain DSM 14371 / CIP 107618 / JCM 11309 / KCTC 3954 / HTE831).